The sequence spans 328 residues: DNA polymerase IV (328 aa).

The region spanning 6-187 (IIHIDMDYFF…LDIGDFPGVG (182 aa)) is the UmuC domain. The Mg(2+) site is built by D10 and D105. The active site involves E106.

Belongs to the DNA polymerase type-Y family. In terms of assembly, monomer. The cofactor is Mg(2+).

Its subcellular location is the cytoplasm. The catalysed reaction is DNA(n) + a 2'-deoxyribonucleoside 5'-triphosphate = DNA(n+1) + diphosphate. Its function is as follows. Poorly processive, error-prone DNA polymerase involved in untargeted mutagenesis. Copies undamaged DNA at stalled replication forks, which arise in vivo from mismatched or misaligned primer ends. These misaligned primers can be extended by PolIV. Exhibits no 3'-5' exonuclease (proofreading) activity. May be involved in translesional synthesis, in conjunction with the beta clamp from PolIII. The polypeptide is DNA polymerase IV (Staphylococcus aureus (strain bovine RF122 / ET3-1)).